Consider the following 676-residue polypeptide: MAKIKKKGTSGQAKNYITRTQAVRKLQISLPDFRRLCIFKGIYPREPRNKKKASKTSTPNTTFYYTKDIQYLLHEPLLRKFRDQKAVAKKIARSLGRGEVGDASRLEKNHAPKLTLDHIIKERYPTFIDALRDLDDALSLLFLFANLPSTSHVPPKTIALCQRLCHEFQHYLITTNSLRKSFLSIKGIYYQATIQGQDIMWLVPYRFVQRVNGDVDYRIMATFVEFYTTLLGFVNFRLYSSIGLRYPPKFDTRSDENGAELAAFTLEGRAVANAAKTIEGSNKQSNNSSNQEVSRDVQAKVDKVIKTAGLDKTKDEQTVEATDENTDAIDRFEPAAPEADTLPQPDISGEEAGALFAPFTFYISREAPKAPLEFILRAFGCKRIGWDAVMGDGAFTHNEADTRITHQIVDRPSLPEGALPAVPAAKEGAVPAVRPGTRIPGRTYIQPQWVWDCINEGKLLRPDLYAPGETLPPHLSPWVKPSKGAYDPRATLAEQEEEGEAEMAGEEEEEESDEEMEEAPETKKADAKADESESEDEDESVDGGMDVADSDDDESESGQEEEDFGGFDDNEAASESEDEEEAARTQHQKELEAEAAGLPFSSNGATDDAKKKKSSQAKKIAAKKRKEEEELERQKMMMSRKKRKLLEKMMYSNKKQSEEAAKLRSKRRKLEKTGEK.

Positions 277–296 (TIEGSNKQSNNSSNQEVSRD) are disordered. A compositionally biased stretch (low complexity) spans 281 to 291 (SNKQSNNSSNQ). A BRCT domain is found at 351–467 (EAGALFAPFT…KLLRPDLYAP (117 aa)). Residues 471–676 (LPPHLSPWVK…RRKLEKTGEK (206 aa)) are disordered. Over residues 494-519 (EQEEEGEAEMAGEEEEEESDEEMEEA) the composition is skewed to acidic residues. Over residues 520–531 (PETKKADAKADE) the composition is skewed to basic and acidic residues. Acidic residues-rich tracts occupy residues 532 to 541 (SESEDEDESV) and 548 to 581 (ADSDDDESESGQEEEDFGGFDDNEAASESEDEEE). A coiled-coil region spans residues 571–676 (EAASESEDEE…RRKLEKTGEK (106 aa)). Basic and acidic residues predominate over residues 582–592 (AARTQHQKELE). The segment covering 611–624 (KKKSSQAKKIAAKK) has biased composition (basic residues). Positions 625 to 635 (RKEEEELERQK) are enriched in basic and acidic residues.

This sequence belongs to the pescadillo family. Component of the NOP7 complex, composed of erb1, nop7 and ytm1. The complex is held together by erb1, which interacts with nop7 via its N-terminal domain and with ytm1 via a high-affinity interaction between the seven-bladed beta-propeller domains of the 2 proteins. The NOP7 complex associates with the 66S pre-ribosome.

It localises to the nucleus. Its subcellular location is the nucleolus. The protein localises to the nucleoplasm. Component of the NOP7 complex, which is required for maturation of the 25S and 5.8S ribosomal RNAs and formation of the 60S ribosome. In Aspergillus terreus (strain NIH 2624 / FGSC A1156), this protein is Pescadillo homolog (nop7).